The chain runs to 284 residues: L-fucose dehydrogenase (284 aa).

Arg19, Ile21, Asp40, Lys41, Asp62, Val63, Asn89, Tyr154, Lys158, Ile187, Thr189, and Leu191 together coordinate NAD(+).

The protein belongs to the short-chain dehydrogenases/reductases (SDR) family.

It carries out the reaction L-fucose + NAD(+) = L-fucono-1,5-lactone + NADH + H(+). It catalyses the reaction D-arabinose + NAD(+) = D-arabinono-1,5-lactone + NADH + H(+). The enzyme catalyses L-galactose + NAD(+) = L-galactono-1,5-lactone + NADH + H(+). It functions in the pathway carbohydrate degradation; L-fucose degradation. Functionally, catalyzes the NAD(+)-dependent oxidation of L-fucose, yielding L-fucono-1,5-lactone, which rapidly converts spontaneously to L-fucone-1,4-lactone. Can also act on D-arabinose and L-galactose, with lower catalytic efficiency. Does not use NADPH. May be the initial enzyme of the putative L-fucose degradation pathway in mammals. This chain is L-fucose dehydrogenase (HSD17B14), found in Oryctolagus cuniculus (Rabbit).